We begin with the raw amino-acid sequence, 266 residues long: 3-methyl-2-oxobutanoate hydroxymethyltransferase (266 aa).

Residues D45 and D84 each contribute to the Mg(2+) site. 3-methyl-2-oxobutanoate-binding positions include 45-46 (DS), D84, and K112. E114 contributes to the Mg(2+) binding site. E181 functions as the Proton acceptor in the catalytic mechanism.

Belongs to the PanB family. As to quaternary structure, homodecamer; pentamer of dimers. Mg(2+) is required as a cofactor.

The protein resides in the cytoplasm. The catalysed reaction is 3-methyl-2-oxobutanoate + (6R)-5,10-methylene-5,6,7,8-tetrahydrofolate + H2O = 2-dehydropantoate + (6S)-5,6,7,8-tetrahydrofolate. Its pathway is cofactor biosynthesis; (R)-pantothenate biosynthesis; (R)-pantoate from 3-methyl-2-oxobutanoate: step 1/2. Its function is as follows. Catalyzes the reversible reaction in which hydroxymethyl group from 5,10-methylenetetrahydrofolate is transferred onto alpha-ketoisovalerate to form ketopantoate. This Pseudomonas fluorescens (strain Pf0-1) protein is 3-methyl-2-oxobutanoate hydroxymethyltransferase.